A 272-amino-acid polypeptide reads, in one-letter code: Orotidine 5'-phosphate decarboxylase (272 aa).

Lys-96 serves as the catalytic Proton donor.

Belongs to the OMP decarboxylase family. Type 2 subfamily.

The enzyme catalyses orotidine 5'-phosphate + H(+) = UMP + CO2. It participates in pyrimidine metabolism; UMP biosynthesis via de novo pathway; UMP from orotate: step 2/2. This chain is Orotidine 5'-phosphate decarboxylase, found in Phocaeicola vulgatus (strain ATCC 8482 / DSM 1447 / JCM 5826 / CCUG 4940 / NBRC 14291 / NCTC 11154) (Bacteroides vulgatus).